We begin with the raw amino-acid sequence, 655 residues long: Protein movement modulator (655 aa).

At 1-54 the chain is on the extracellular side; that stretch reads MEQPSILVKILHSIPHVNYTFRRVNDTFNPDSDVYLEPTNNKLQCQQKGIELQS. 2 N-linked (GlcNAc...) asparagine glycosylation sites follow: N18 and N25. Residues 55-75 form a helical membrane-spanning segment; the sequence is LVILASIPAGLLIGSLLGLLL. Over 76–95 the chain is Cytoplasmic; it reads YLLTRCCDRRQRKPSAQRCQ. The helical transmembrane segment at 96–116 threads the bilayer; the sequence is SCSLVIITLMTCAAIGLGLYG. Residues 117–231 lie on the Extracellular side of the membrane; the sequence is NDDFHNGLLQ…GEFYESIRWP (115 aa). N-linked (GlcNAc...) asparagine glycosylation is found at N171, N188, and N211. A helical transmembrane segment spans residues 232-252; that stretch reads ATLAFLTVLLLLCTVLVIGVA. Residues 253–258 lie on the Cytoplasmic side of the membrane; that stretch reads RRSRCT. A helical transmembrane segment spans residues 259–279; it reads LIFFSVSGLFCIIICWLLAGV. The Extracellular portion of the chain corresponds to 280 to 401; sequence YLASSVAAGD…ALRGLCGGGL (122 aa). N326 and N372 each carry an N-linked (GlcNAc...) asparagine glycan. Residues 402 to 422 traverse the membrane as a helical segment; sequence LGLSLMMVAGLLTSFLLTILV. At 423 to 655 the chain is on the cytoplasmic side; the sequence is YADSHAWIYL…CKTLESNDFY (233 aa). The interval 446–576 is disordered; sequence APLFPASNAP…NNHYNNTQHR (131 aa). Over residues 450-464 the composition is skewed to low complexity; the sequence is PASNAPSASISPTAP. The span at 465 to 480 shows a compositional bias: polar residues; sequence LSTGTINRTLLHHQQA. The segment covering 482–509 has biased composition (gly residues); the sequence is SGGGSGTLPGSGGGAGAGGGVGANGHNG. 2 stretches are compositionally biased toward low complexity: residues 526-539 and 546-576; these read SPSS…STAT and SYHN…TQHR. Phosphoserine occurs at positions 597 and 599.

Belongs to the tweety family.

Its subcellular location is the cell membrane. The enzyme catalyses chloride(in) = chloride(out). Probable large-conductance Ca(2+)-activated chloride channel. Modulator of embryonic movement. This is Protein movement modulator from Drosophila melanogaster (Fruit fly).